Reading from the N-terminus, the 210-residue chain is Large ribosomal subunit protein uL3 (210 aa).

It belongs to the universal ribosomal protein uL3 family. As to quaternary structure, part of the 50S ribosomal subunit. Forms a cluster with proteins L14 and L19.

One of the primary rRNA binding proteins, it binds directly near the 3'-end of the 23S rRNA, where it nucleates assembly of the 50S subunit. The protein is Large ribosomal subunit protein uL3 of Syntrophotalea carbinolica (strain DSM 2380 / NBRC 103641 / GraBd1) (Pelobacter carbinolicus).